A 274-amino-acid chain; its full sequence is Rhamnulose-1-phosphate aldolase (274 aa).

The active site involves glutamate 117. 3 residues coordinate Zn(2+): histidine 141, histidine 143, and histidine 212.

This sequence belongs to the aldolase class II family. RhaD subfamily. As to quaternary structure, homotetramer. It depends on Zn(2+) as a cofactor.

Its subcellular location is the cytoplasm. The catalysed reaction is L-rhamnulose 1-phosphate = (S)-lactaldehyde + dihydroxyacetone phosphate. It participates in carbohydrate degradation; L-rhamnose degradation; glycerone phosphate from L-rhamnose: step 3/3. Catalyzes the reversible cleavage of L-rhamnulose-1-phosphate to dihydroxyacetone phosphate (DHAP) and L-lactaldehyde. The polypeptide is Rhamnulose-1-phosphate aldolase (Escherichia coli O45:K1 (strain S88 / ExPEC)).